A 316-amino-acid polypeptide reads, in one-letter code: Cytochrome c oxidase assembly protein COX18, mitochondrial (316 aa).

Residues Trp-164–Ile-184 form a helical membrane-spanning segment. Topologically, residues Arg-185–Ser-213 are mitochondrial matrix. Residues Pro-214 to Val-234 form a helical membrane-spanning segment. Residues Glu-235–Leu-274 lie on the Mitochondrial intermembrane side of the membrane. A helical membrane pass occupies residues Gly-275–Ile-295. The Mitochondrial matrix portion of the chain corresponds to Ser-296–Arg-316.

Belongs to the OXA1/ALB3/YidC family. Interacts with PNT1 and MSS2.

The protein localises to the mitochondrion inner membrane. Its function is as follows. Required for the insertion of integral membrane proteins into the mitochondrial inner membrane. Essential for the activity and assembly of cytochrome c oxidase. Plays a central role in the translocation and export of the C-terminal part of the COX2 protein into the mitochondrial intermembrane space. This Saccharomyces cerevisiae (strain ATCC 204508 / S288c) (Baker's yeast) protein is Cytochrome c oxidase assembly protein COX18, mitochondrial (COX18).